The following is a 132-amino-acid chain: Protein NrdI (132 aa).

It belongs to the NrdI family.

Probably involved in ribonucleotide reductase function. The polypeptide is Protein NrdI (Agrobacterium fabrum (strain C58 / ATCC 33970) (Agrobacterium tumefaciens (strain C58))).